A 259-amino-acid chain; its full sequence is uncharacterized protein (259 aa).

Residues 171 to 259 (LSKMPVPQSP…SYSTYEDDDF (89 aa)) form a disordered region. Positions 179-201 (SPSVPTMPSVNNDQPTQKPNKIT) are enriched in polar residues. A compositionally biased stretch (basic residues) spans 202–211 (RNYKPKHQHN). The span at 212–236 (YKPNYQPNYQPNYGQNCSNSHSNDY) shows a compositional bias: polar residues.

The protein resides in the virion. This is an uncharacterized protein from Acanthamoeba polyphaga (Amoeba).